Reading from the N-terminus, the 101-residue chain is Small ribosomal subunit protein uS14 (101 aa).

The interval 1–20 is disordered; that stretch reads MAKTSQVNRNKRREKMAARD.

Belongs to the universal ribosomal protein uS14 family. Part of the 30S ribosomal subunit. Contacts proteins S3 and S10.

Binds 16S rRNA, required for the assembly of 30S particles and may also be responsible for determining the conformation of the 16S rRNA at the A site. The protein is Small ribosomal subunit protein uS14 of Acidiphilium cryptum (strain JF-5).